We begin with the raw amino-acid sequence, 624 residues long: Altered inheritance of mitochondria protein 9, mitochondrial (624 aa).

The N-terminal 34 residues, 1–34 (MLSRVARCSRTLNQVTRNGQSGLFSAVLRTSIRQ), are a transit peptide targeting the mitochondrion.

The protein belongs to the AIM9 family.

The protein localises to the mitochondrion. The chain is Altered inheritance of mitochondria protein 9, mitochondrial (AIM9) from Candida albicans (strain WO-1) (Yeast).